A 543-amino-acid polypeptide reads, in one-letter code: Chaperonin GroEL (543 aa).

ATP-binding positions include 30–33 (TLGP), Lys-51, 87–91 (DGTTT), Gly-415, 479–481 (NAA), and Asp-495.

It belongs to the chaperonin (HSP60) family. As to quaternary structure, forms a cylinder of 14 subunits composed of two heptameric rings stacked back-to-back. Interacts with the co-chaperonin GroES.

It localises to the cytoplasm. It carries out the reaction ATP + H2O + a folded polypeptide = ADP + phosphate + an unfolded polypeptide.. Its function is as follows. Together with its co-chaperonin GroES, plays an essential role in assisting protein folding. The GroEL-GroES system forms a nano-cage that allows encapsulation of the non-native substrate proteins and provides a physical environment optimized to promote and accelerate protein folding. This Francisella philomiragia subsp. philomiragia (strain ATCC 25017 / CCUG 19701 / FSC 153 / O#319-036) protein is Chaperonin GroEL.